The chain runs to 274 residues: Eukaryotic translation initiation factor 3 subunit G-2 (274 aa).

Residues 194–272 form the RRM domain; the sequence is SAVRISNLSE…LILCVEWSKP (79 aa).

The protein belongs to the eIF-3 subunit G family. As to quaternary structure, component of the eukaryotic translation initiation factor 3 (eIF-3) complex. The eIF-3 complex interacts with pix.

It localises to the cytoplasm. Functionally, RNA-binding component of the eukaryotic translation initiation factor 3 (eIF-3) complex, which is involved in protein synthesis of a specialized repertoire of mRNAs and, together with other initiation factors, stimulates binding of mRNA and methionyl-tRNAi to the 40S ribosome. The eIF-3 complex specifically targets and initiates translation of a subset of mRNAs involved in cell proliferation. This subunit can bind 18S rRNA. In Drosophila pseudoobscura pseudoobscura (Fruit fly), this protein is Eukaryotic translation initiation factor 3 subunit G-2.